Consider the following 353-residue polypeptide: Photosystem II D2 protein (353 aa).

Thr-2 carries the post-translational modification N-acetylthreonine. Phosphothreonine is present on Thr-2. The helical transmembrane segment at 41-61 (CAYFALGGWFTGTTFVTSWYT) threads the bilayer. A chlorophyll a-binding site is contributed by His-118. A helical membrane pass occupies residues 125–141 (GFMLRQFELARSVQLRP). Positions 130 and 143 each coordinate pheophytin a. The chain crosses the membrane as a helical span at residues 153-166 (VFVSVFLIYPLGQS). His-198 is a chlorophyll a binding site. The helical transmembrane segment at 208-228 (AALLCAIHGATVENTLFEDGD) threads the bilayer. Residues His-215 and Phe-262 each contribute to the a plastoquinone site. His-215 is a Fe cation binding site. His-269 serves as a coordination point for Fe cation. The chain crosses the membrane as a helical span at residues 279–295 (GLWMSALGVVGLALNLR).

It belongs to the reaction center PufL/M/PsbA/D family. PSII is composed of 1 copy each of membrane proteins PsbA, PsbB, PsbC, PsbD, PsbE, PsbF, PsbH, PsbI, PsbJ, PsbK, PsbL, PsbM, PsbT, PsbX, PsbY, PsbZ, Psb30/Ycf12, at least 3 peripheral proteins of the oxygen-evolving complex and a large number of cofactors. It forms dimeric complexes. The D1/D2 heterodimer binds P680, chlorophylls that are the primary electron donor of PSII, and subsequent electron acceptors. It shares a non-heme iron and each subunit binds pheophytin, quinone, additional chlorophylls, carotenoids and lipids. There is also a Cl(-1) ion associated with D1 and D2, which is required for oxygen evolution. The PSII complex binds additional chlorophylls, carotenoids and specific lipids. serves as cofactor.

The protein localises to the plastid. Its subcellular location is the chloroplast thylakoid membrane. The catalysed reaction is 2 a plastoquinone + 4 hnu + 2 H2O = 2 a plastoquinol + O2. Its function is as follows. Photosystem II (PSII) is a light-driven water:plastoquinone oxidoreductase that uses light energy to abstract electrons from H(2)O, generating O(2) and a proton gradient subsequently used for ATP formation. It consists of a core antenna complex that captures photons, and an electron transfer chain that converts photonic excitation into a charge separation. The D1/D2 (PsbA/PsbD) reaction center heterodimer binds P680, the primary electron donor of PSII as well as several subsequent electron acceptors. D2 is needed for assembly of a stable PSII complex. This chain is Photosystem II D2 protein, found in Nuphar advena (Common spatterdock).